An 865-amino-acid polypeptide reads, in one-letter code: Protein translocase subunit SecA (865 aa).

ATP contacts are provided by residues Q93, 111 to 115 (GEGKT), and D501. Zn(2+) is bound by residues C841, C843, C852, and C853.

The protein belongs to the SecA family. Monomer and homodimer. Part of the essential Sec protein translocation apparatus which comprises SecA, SecYEG and auxiliary proteins SecDF-YajC and YidC. Requires Zn(2+) as cofactor.

It is found in the cell inner membrane. Its subcellular location is the cytoplasm. It catalyses the reaction ATP + H2O + cellular proteinSide 1 = ADP + phosphate + cellular proteinSide 2.. Part of the Sec protein translocase complex. Interacts with the SecYEG preprotein conducting channel. Has a central role in coupling the hydrolysis of ATP to the transfer of proteins into and across the cell membrane, serving as an ATP-driven molecular motor driving the stepwise translocation of polypeptide chains across the membrane. This chain is Protein translocase subunit SecA, found in Helicobacter pylori (strain G27).